The chain runs to 150 residues: Putative ribosome maturation factor RimP (150 aa).

It belongs to the RimP family.

The protein localises to the cytoplasm. Its function is as follows. Required for maturation of 30S ribosomal subunits. The chain is Putative ribosome maturation factor RimP from Mycobacterium leprae (strain TN).